Here is a 690-residue protein sequence, read N- to C-terminus: Cyclic nucleotide-gated channel alpha-1 (690 aa).

Residues 1 to 163 (MKKVIINTWH…VVIDPSGNTY (163 aa)) are Cytoplasmic-facing. Disordered stretches follow at residues 33-76 (GACS…PSQR) and 88-151 (NVNN…EEKK). The span at 40–54 (GDDDDSASMFEESET) shows a compositional bias: acidic residues. The segment covering 64-76 (RSNTHGSGQPSQR) has biased composition (polar residues). Residues 111–151 (SKPDDKNENKKDPEKKKKKEKDKDKKKKEEKGKDKKEEEKK) show a composition bias toward basic and acidic residues. Residues 164–185 (YNWLFCITLPVMYNWTMIIARA) form a helical membrane-spanning segment. The Extracellular portion of the chain corresponds to 186–195 (CFDELQSDYL). Residues 196 to 215 (EYWLAFDYLSDVVYLLDMFV) form a helical membrane-spanning segment. The Cytoplasmic portion of the chain corresponds to 216-241 (RTRTGYLEQGLLVKEERKLIDKYKST). A helical transmembrane segment spans residues 242 to 251 (FQFKLDVLSV). Residues 252–264 (IPTDLLYIKFGWN) lie on the Extracellular side of the membrane. Residues 265–283 (YPEIRLNRLLRISRMFEFF) traverse the membrane as a helical segment. The Cytoplasmic segment spans residues 284-291 (QRTETRTN). A helical membrane pass occupies residues 292–315 (YPNIFRISNLVMYIIIIIHWNACV). The tract at residues 293–402 (PNIFRISNLV…NIGSMISNMN (110 aa)) is ion conduction pathway. The Extracellular portion of the chain corresponds to 316 to 342 (YFSISKAIGFGNDTWVYPDVNDPDFGR). A glycan (N-linked (GlcNAc...) asparagine) is linked at Asn327. The next 2 membrane-spanning stretches (helical) occupy residues 343–373 (LARKYVYSLYWSTLTLTTIGETPPPVRDSEY) and 374–399 (FFVVADFLIGVLIFATIVGNIGSMIS). The interval 360 to 363 (TIGE) is selectivity filter. Residues 400 to 690 (NMNAARAEFQ…ESGPTDSTQD (291 aa)) are Cytoplasmic-facing. The C-linker stretch occupies residues 403–479 (AARAEFQARI…DTLKKVRIFA (77 aa)). Positions 482 to 603 (EAGLLVELVL…EEKGKQILMK (122 aa)) are cyclic nucleotide-binding domain (CNBD). 3',5'-cyclic GMP-binding residues include Gly543, Ser546, Arg559, and Thr560. Residues Arg559 and Thr560 each coordinate 3',5'-cyclic AMP. Positions 621-664 (LEEKVTRMESSVDLLQTRFARILAEYESMQQKLKQRLTKVEKFL) form a coiled coil.

It belongs to the cyclic nucleotide-gated cation channel (TC 1.A.1.5) family. CNGA1 subfamily. In terms of assembly, forms a heterotetramer with CNGB1 in a 3:1 ratio. May also form cyclic nucleotide-activated homotetrameric channels, that are efficiently activated by saturating cGMP, but poorly activated by saturating cAMP compared to the heterotetramer with CNGB1. The channel binds Ca(2+)-bound CALM1 via CaM1 and CaM2 regions of the CNGB1 subunit; this interaction modulates the affinity of the channel for cNMPs in response to intracellular Ca(2+) levels. As to expression, expressed in the retina, in rod cells (at protein level).

The protein localises to the cell membrane. It catalyses the reaction Ca(2+)(in) = Ca(2+)(out). The enzyme catalyses Na(+)(in) = Na(+)(out). The catalysed reaction is K(+)(in) = K(+)(out). It carries out the reaction NH4(+)(in) = NH4(+)(out). It catalyses the reaction Rb(+)(in) = Rb(+)(out). The enzyme catalyses Li(+)(in) = Li(+)(out). The catalysed reaction is Cs(+)(in) = Cs(+)(out). Its function is as follows. Pore-forming subunit of the rod cyclic nucleotide-gated channel. Mediates rod photoresponses at dim light converting transient changes in intracellular cGMP levels into electrical signals. In the dark, cGMP levels are high and keep the channel open enabling a steady inward current carried by Na(+) and Ca(2+) ions that leads to membrane depolarization and neurotransmitter release from synaptic terminals. Upon photon absorption cGMP levels decline leading to channel closure and membrane hyperpolarization that ultimately slows neurotransmitter release and signals the presence of light, the end point of the phototransduction cascade. Conducts cGMP- and cAMP-gated ion currents, with permeability for monovalent and divalent cations. The selectivity for Ca(2+) over Na(+) increases with cGMP concentrations, whereas the selectivity among monovalent ions is independent of the cGMP levels. This Bos taurus (Bovine) protein is Cyclic nucleotide-gated channel alpha-1.